A 307-amino-acid polypeptide reads, in one-letter code: Pseudouridine-5'-phosphate glycosidase (307 aa).

Glu-25 functions as the Proton donor in the catalytic mechanism. Positions 86 and 106 each coordinate substrate. Mn(2+) is bound at residue Asp-138. Ser-140–Asp-142 serves as a coordination point for substrate. Catalysis depends on Lys-159, which acts as the Nucleophile.

This sequence belongs to the pseudouridine-5'-phosphate glycosidase family. As to quaternary structure, homotrimer. Mn(2+) serves as cofactor.

It carries out the reaction D-ribose 5-phosphate + uracil = psi-UMP + H2O. Functionally, catalyzes the reversible cleavage of pseudouridine 5'-phosphate (PsiMP) to ribose 5-phosphate and uracil. Functions biologically in the cleavage direction, as part of a pseudouridine degradation pathway. The protein is Pseudouridine-5'-phosphate glycosidase of Caldanaerobacter subterraneus subsp. tengcongensis (strain DSM 15242 / JCM 11007 / NBRC 100824 / MB4) (Thermoanaerobacter tengcongensis).